A 32-amino-acid polypeptide reads, in one-letter code: Corticostatin-related peptide RK-1 (32 aa).

Cystine bridges form between cysteine 3/cysteine 29, cysteine 5/cysteine 19, and cysteine 9/cysteine 28.

The protein resides in the secreted. Functionally, has antimicrobial activity against E.coli and activates ion channel activity. The chain is Corticostatin-related peptide RK-1 from Oryctolagus cuniculus (Rabbit).